The primary structure comprises 289 residues: Oxaloacetate decarboxylase (289 aa).

Ser50 is a substrate binding site. Asp88 lines the Mg(2+) pocket. Substrate contacts are provided by Arg159 and His235.

Belongs to the isocitrate lyase/PEP mutase superfamily. Oxaloacetate decarboxylase family. In terms of assembly, homotetramer; dimer of dimers. It depends on Mg(2+) as a cofactor.

It carries out the reaction oxaloacetate + H(+) = pyruvate + CO2. In terms of biological role, catalyzes the decarboxylation of oxaloacetate into pyruvate. Seems to play a role in maintaining cellular concentrations of bicarbonate and pyruvate. In Pseudomonas fluorescens (strain ATCC BAA-477 / NRRL B-23932 / Pf-5), this protein is Oxaloacetate decarboxylase.